A 993-amino-acid polypeptide reads, in one-letter code: Protein translocase subunit SecA (993 aa).

Residues glutamine 102, 120–124, and aspartate 523 each bind ATP; that span reads GEGKT. The disordered stretch occupies residues 910–962; it reads ENAPEPQISGGNGQQPPQRRQQTSLDDLEKQFERKKKRELEQARMAGGGMPDA. Basic and acidic residues predominate over residues 936–951; that stretch reads DLEKQFERKKKRELEQ. Positions 979, 981, 990, and 991 each coordinate Zn(2+).

Belongs to the SecA family. Monomer and homodimer. Part of the essential Sec protein translocation apparatus which comprises SecA, SecYEG and auxiliary proteins SecDF. Other proteins may also be involved. The cofactor is Zn(2+).

It is found in the cell inner membrane. It localises to the cytoplasm. It catalyses the reaction ATP + H2O + cellular proteinSide 1 = ADP + phosphate + cellular proteinSide 2.. Part of the Sec protein translocase complex. Interacts with the SecYEG preprotein conducting channel. Has a central role in coupling the hydrolysis of ATP to the transfer of proteins into and across the cell membrane, serving as an ATP-driven molecular motor driving the stepwise translocation of polypeptide chains across the membrane. This is Protein translocase subunit SecA from Koribacter versatilis (strain Ellin345).